A 96-amino-acid chain; its full sequence is Large ribosomal subunit protein bL21 (96 aa).

This sequence belongs to the bacterial ribosomal protein bL21 family. Part of the 50S ribosomal subunit. Contacts protein L20.

Functionally, this protein binds to 23S rRNA in the presence of protein L20. In Chlorobium chlorochromatii (strain CaD3), this protein is Large ribosomal subunit protein bL21.